Consider the following 568-residue polypeptide: K(+) efflux antiporter 5 (568 aa).

The first 20 residues, M1–S20, serve as a signal peptide directing secretion. The segment at E59–V78 is disordered. Transmembrane regions (helical) follow at residues L154 to C174, P178 to I198, M201 to L221, V230 to C250, G264 to V284, I298 to L318, L334 to P354, L389 to F409, N422 to W442, I447 to V467, I476 to S496, and L510 to I530.

The protein belongs to the monovalent cation:proton antiporter 2 (CPA2) transporter (TC 2.A.37) family. KEA (TC 2.A.37.1) subfamily. Expressed in roots, stems, leaves, flowers and silique.

The protein resides in the golgi apparatus membrane. Its subcellular location is the golgi apparatus. It localises to the trans-Golgi network membrane. It is found in the prevacuolar compartment membrane. The protein localises to the endomembrane system. The enzyme catalyses K(+)(in) + H(+)(out) = K(+)(out) + H(+)(in). Functionally, electroneutral K(+)/H(+) efflux antiporter involved in K(+) homeostasis and osmotic adjustment. Together with KEA4 and KEA6, promotes growth and development, and facilitates endosomal pH and ions homeostasis, as well as salt tolerance (e.g. K(+), NaCl and LiCl), probably by supporting cell wall biosynthesis during rapid etiolated seedling growth. This is K(+) efflux antiporter 5 from Arabidopsis thaliana (Mouse-ear cress).